Reading from the N-terminus, the 264-residue chain is uncharacterized protein (264 aa).

Residues 19–45 are a coiled coil; the sequence is AQEESMEQLKDINTKIDNSEKKISLEN.

This is an uncharacterized protein from Acanthamoeba polyphaga mimivirus (APMV).